Reading from the N-terminus, the 608-residue chain is 1-deoxy-D-xylulose-5-phosphate synthase (608 aa).

Thiamine diphosphate-binding positions include H80 and 121–123 (GHS). D152 contributes to the Mg(2+) binding site. Thiamine diphosphate is bound by residues 153-154 (GA), N181, Y282, and E357. A Mg(2+)-binding site is contributed by N181.

The protein belongs to the transketolase family. DXPS subfamily. In terms of assembly, homodimer. The cofactor is Mg(2+). It depends on thiamine diphosphate as a cofactor.

The enzyme catalyses D-glyceraldehyde 3-phosphate + pyruvate + H(+) = 1-deoxy-D-xylulose 5-phosphate + CO2. It functions in the pathway metabolic intermediate biosynthesis; 1-deoxy-D-xylulose 5-phosphate biosynthesis; 1-deoxy-D-xylulose 5-phosphate from D-glyceraldehyde 3-phosphate and pyruvate: step 1/1. In terms of biological role, catalyzes the acyloin condensation reaction between C atoms 2 and 3 of pyruvate and glyceraldehyde 3-phosphate to yield 1-deoxy-D-xylulose-5-phosphate (DXP). The sequence is that of 1-deoxy-D-xylulose-5-phosphate synthase from Buchnera aphidicola subsp. Acyrthosiphon pisum (strain 5A).